The primary structure comprises 195 residues: Probable molybdenum cofactor guanylyltransferase (195 aa).

Residues 8 to 10 (LSG), K20, D65, and D96 contribute to the GTP site. Mg(2+) is bound at residue D96.

Belongs to the MobA family. Requires Mg(2+) as cofactor.

Its subcellular location is the cytoplasm. The catalysed reaction is Mo-molybdopterin + GTP + H(+) = Mo-molybdopterin guanine dinucleotide + diphosphate. Its function is as follows. Transfers a GMP moiety from GTP to Mo-molybdopterin (Mo-MPT) cofactor (Moco or molybdenum cofactor) to form Mo-molybdopterin guanine dinucleotide (Mo-MGD) cofactor. The protein is Probable molybdenum cofactor guanylyltransferase of Bacillus licheniformis (strain ATCC 14580 / DSM 13 / JCM 2505 / CCUG 7422 / NBRC 12200 / NCIMB 9375 / NCTC 10341 / NRRL NRS-1264 / Gibson 46).